We begin with the raw amino-acid sequence, 810 residues long: Transmembrane GTPase Marf (810 aa).

Residues 1–637 (MAAYLNRTIS…TTTPVEATPV (637 aa)) lie on the Cytoplasmic side of the membrane. Thr-8 carries the phosphothreonine modification. Residues 13-40 (TGQTGPADDDRHASSTDTVDKSGPGSPL) are disordered. Over residues 20 to 32 (DDDRHASSTDTVD) the composition is skewed to basic and acidic residues. Ser-38 bears the Phosphoserine mark. A Dynamin-type G domain is found at 134–382 (QRDHMKVAFF…IRYFEFQDFE (249 aa)). A G1 motif region spans residues 144-151 (GRTSNGKS). 147–152 (SNGKSS) lines the GTP pocket. A G2 motif region spans residues 170–171 (TT). The G3 motif stretch occupies residues 239-242 (DSPG). Position 298–301 (298–301 (NRWD)) interacts with GTP. The segment at 298–301 (NRWD) is G4 motif. A region of interest (G5 motif) is located at residue Lys-327. A GTP-binding site is contributed by Ser-345. The stretch at 427 to 476 (RNLKQDQKNLLTERIQGTETQMMQVTREMKMKIHNMVEEVEEKVSKALNE) forms a coiled coil. Thr-553 carries the phosphothreonine modification. Ser-554 is modified (phosphoserine). The residue at position 555 (Thr-555) is a Phosphothreonine. The tract at residues 609–630 (GQPALVNRQSSIGHSVSTPTTT) is disordered. A helical membrane pass occupies residues 638–648 (CLLPAPVVAGI). Topologically, residues 649–668 (TPEQLSLISRFAVSSIGSQG) are mitochondrial intermembrane. The chain crosses the membrane as a helical span at residues 669 to 689 (TVGGLVVAGVMLKTIGWRVLV). Residues 690 to 810 (GVGALYGCIY…IFEHNYISPQ (121 aa)) are Cytoplasmic-facing. Positions 759–806 (TATTDMNDELKTLDSQLNILEANQKQLKLLRNKANYIQNELDIFEHNY) form a coiled coil.

It belongs to the TRAFAC class dynamin-like GTPase superfamily. Dynamin/Fzo/YdjA family. Mitofusin subfamily. In terms of assembly, interacts with Mul1. Post-translationally, ubiquitinated by park and Mul1. Ubiquitinated, probably by HUWE1, when dietary stearate (C18:0) levels are low; ubiquitination inhibits mitochondrial fusion. In terms of tissue distribution, widely expressed in embryos, accumulating in the mesoderm and endoderm during gut development. In the male germ line, it is expressed in spermatogonia, spermatocytes and early spermatids.

It is found in the mitochondrion outer membrane. The enzyme catalyses GTP + H2O = GDP + phosphate + H(+). In terms of biological role, mitochondrial outer membrane GTPase that mediates mitochondrial clustering and fusion. Mitochondrial fusion is the physical merging of mitochondria that gives rise to mitochondrial networks, and this process is counterbalanced by mitochondrial fission which fragments networks. Promotes, but is not required for park recruitment to dysfunctional mitochondria. The protein is Transmembrane GTPase Marf (Marf) of Drosophila melanogaster (Fruit fly).